We begin with the raw amino-acid sequence, 881 residues long: Receptor-like protein 41 (881 aa).

The N-terminal stretch at 1–21 (MSELLLRLNFLLLLLLSCVSP) is a signal peptide. Residues 22–844 (SSFVTFNNPV…EEQEQVLNWE (823 aa)) lie on the Extracellular side of the membrane. 5 N-linked (GlcNAc...) asparagine glycosylation sites follow: N58, N70, N91, N109, and N145. 16 LRR repeats span residues 97 to 121 (FHEL…KFGM), 122 to 145 (LNKL…SFSN), 146 to 169 (LSML…VRNL), 170 to 195 (RKLR…LFEL), 197 to 219 (HLTY…EFGN), 220 to 244 (LNKL…ISNL), 245 to 267 (TQLT…VQNL), 268 to 291 (TKLS…LFTM), 293 to 317 (FLSY…SSSS), 319 to 340 (LESL…ISKL), 342 to 364 (NLKE…LFSS), 365 to 390 (FKSL…SYIS), 391 to 412 (LTLE…ILKS), 413 to 437 (LPNL…LWSL), 439 to 462 (RLSS…ILVN), and 463 to 486 (SSVQ…PLSI). An N-linked (GlcNAc...) asparagine glycan is attached at N189. Residues N243 and N266 are each glycosylated (N-linked (GlcNAc...) asparagine). N305 and N312 each carry an N-linked (GlcNAc...) asparagine glycan. An N-linked (GlcNAc...) asparagine glycan is attached at N402. N462 is a glycosylation site (N-linked (GlcNAc...) asparagine). The LRR 17; degenerate repeat unit spans residues 487 to 506 (IYFSARYNRFKGDIPLSICN). Residues N506 and N519 are each glycosylated (N-linked (GlcNAc...) asparagine). LRR repeat units follow at residues 507–528 (RSSL…PPCL), 529–552 (SNLL…YFAD), 554–576 (PLRS…LLNC), 578–599 (ALQF…YLKV), 600–624 (LPKL…NQGS), 627–651 (FPEL…FFVN), 701–724 (TSSA…IGLL), 725–748 (KALI…LANL), 749–772 (VKIE…LGTL), and 774–797 (FLAY…QITG). N-linked (GlcNAc...) asparagine glycosylation is present at N575. N731 carries N-linked (GlcNAc...) asparagine glycosylation. N779 carries N-linked (GlcNAc...) asparagine glycosylation. A helical membrane pass occupies residues 845-865 (GVAIGYGVGVLLGLAIAQLIA). Topologically, residues 866 to 881 (SYKPEWLACLIKSRNR) are cytoplasmic.

It belongs to the RLP family.

It localises to the cell membrane. In terms of biological role, may be involved in ABA-induced senescence responses. This is Receptor-like protein 41 from Arabidopsis thaliana (Mouse-ear cress).